Here is a 572-residue protein sequence, read N- to C-terminus: MSSCLLPQFKCPPDSFSIHFRTSFCAPKHNKGSVFFQPQCAVSTSPALLTSMLDVAKLRLPSFDTDSDSLISDRQWTYTRPDGPSTEAKYLEALASETLLTSDEAVVVAAAAEAVALARAAVKVAKDATLFKNSNNTNLLTSSTADKRSKWDQFTEKERAGILGHLAVSDNGIVSDKITASASNKESIGDLESEKQEEVELLEEQPSVSLAVRSTRQTERKARRAKGLEKTASGIPSVKTGSSPKKKRLVAQEVDHNDPLRYLRMTTSSSKLLTVREEHELSAGIQDLLKLERLQTELTERSGRQPTFAQWASAAGVDQKSLRQRIHHGTLCKDKMIKSNIRLVISIAKNYQGAGMNLQDLVQEGCRGLVRGAEKFDATKGFKFSTYAHWWIKQAVRKSLSDQSRMIRLPFHMVEATYRVKEARKQLYSETGKHPKNEEIAEATGLSMKRLMAVLLSPKPPRSLDQKIGMNQNLKPSEVIADPEAVTSEDILIKEFMRQDLDKVLDSLGTREKQVIRWRFGMEDGRMKTLQEIGEMMGVSRERVRQIESSAFRKLKNKKRNNHLQQYLVAQS.

The N-terminal 39 residues, 1 to 39 (MSSCLLPQFKCPPDSFSIHFRTSFCAPKHNKGSVFFQPQ), are a transit peptide targeting the chloroplast. The tract at residues 215 to 249 (TRQTERKARRAKGLEKTASGIPSVKTGSSPKKKRL) is disordered. The short motif at 360–373 (DLVQEGCRGLVRGA) is the Polymerase core binding element. The segment at residues 530–549 (LQEIGEMMGVSRERVRQIES) is a DNA-binding region (H-T-H motif).

Belongs to the sigma-70 factor family. As to expression, highly expressed in cotyledons, to a lesser extent in leaves, sepals and siliques, and barely expressed in roots. Present in seedlings.

It localises to the plastid. The protein resides in the chloroplast. In terms of biological role, required for the transition of plastids into chloroplasts by coordinating nuclear and chloroplastic genomes under light conditions. Sigma factors are initiation factors that promote the attachment of plastid-encoded RNA polymerase (PEP) to specific initiation sites and are then released. Promotes the biosynthesis of plastid-encoded tRNAs (e.g. trnE-UUC and trnV-UAC). This chain is RNA polymerase sigma factor sigB (SIGB), found in Arabidopsis thaliana (Mouse-ear cress).